A 159-amino-acid chain; its full sequence is 2-C-methyl-D-erythritol 2,4-cyclodiphosphate synthase (159 aa).

A divalent metal cation contacts are provided by D8 and H10. 4-CDP-2-C-methyl-D-erythritol 2-phosphate is bound by residues 8 to 10 and 34 to 35; these read DVH and HS. A divalent metal cation is bound at residue H42. Residues 56–58, 61–65, 100–106, 132–135, F139, and R142 each bind 4-CDP-2-C-methyl-D-erythritol 2-phosphate; these read DIG, FPDTD, AQAPKML, and TTTE.

Belongs to the IspF family. In terms of assembly, homotrimer. Requires a divalent metal cation as cofactor.

It carries out the reaction 4-CDP-2-C-methyl-D-erythritol 2-phosphate = 2-C-methyl-D-erythritol 2,4-cyclic diphosphate + CMP. Its pathway is isoprenoid biosynthesis; isopentenyl diphosphate biosynthesis via DXP pathway; isopentenyl diphosphate from 1-deoxy-D-xylulose 5-phosphate: step 4/6. Functionally, involved in the biosynthesis of isopentenyl diphosphate (IPP) and dimethylallyl diphosphate (DMAPP), two major building blocks of isoprenoid compounds. Catalyzes the conversion of 4-diphosphocytidyl-2-C-methyl-D-erythritol 2-phosphate (CDP-ME2P) to 2-C-methyl-D-erythritol 2,4-cyclodiphosphate (ME-CPP) with a corresponding release of cytidine 5-monophosphate (CMP). This Salmonella typhi protein is 2-C-methyl-D-erythritol 2,4-cyclodiphosphate synthase.